The following is a 518-amino-acid chain: Bifunctional purine biosynthesis protein PurH (518 aa).

The region spanning 1–144 (MSKRALISVS…KNHAAVTVVC (144 aa)) is the MGS-like domain.

The protein belongs to the PurH family.

The enzyme catalyses (6R)-10-formyltetrahydrofolate + 5-amino-1-(5-phospho-beta-D-ribosyl)imidazole-4-carboxamide = 5-formamido-1-(5-phospho-D-ribosyl)imidazole-4-carboxamide + (6S)-5,6,7,8-tetrahydrofolate. The catalysed reaction is IMP + H2O = 5-formamido-1-(5-phospho-D-ribosyl)imidazole-4-carboxamide. It functions in the pathway purine metabolism; IMP biosynthesis via de novo pathway; 5-formamido-1-(5-phospho-D-ribosyl)imidazole-4-carboxamide from 5-amino-1-(5-phospho-D-ribosyl)imidazole-4-carboxamide (10-formyl THF route): step 1/1. The protein operates within purine metabolism; IMP biosynthesis via de novo pathway; IMP from 5-formamido-1-(5-phospho-D-ribosyl)imidazole-4-carboxamide: step 1/1. The protein is Bifunctional purine biosynthesis protein PurH of Lactococcus lactis subsp. cremoris (strain SK11).